Reading from the N-terminus, the 246-residue chain is Small ribosomal subunit protein uS2 (246 aa).

Belongs to the universal ribosomal protein uS2 family.

The protein is Small ribosomal subunit protein uS2 of Stutzerimonas stutzeri (strain A1501) (Pseudomonas stutzeri).